Reading from the N-terminus, the 366-residue chain is Ubiquitin carboxyl-terminal hydrolase 46 (366 aa).

One can recognise a USP domain in the interval phenylalanine 35–arginine 365. The Nucleophile role is filled by cysteine 44. Residues cysteine 182, cysteine 185, cysteine 229, and cysteine 232 each contribute to the Zn(2+) site. The active-site Proton acceptor is histidine 313.

It belongs to the peptidase C19 family. USP12/USP46 subfamily. Interacts with WDR48. Interacts with WDR20. Interacts with DMWD. Component of the USP46/WDR20/WDR48 deubiquitinating complex. In terms of tissue distribution, detected in lung and spleen, and at lower levels in brain, kidney, testis and liver.

The protein localises to the cytoplasm. The catalysed reaction is Thiol-dependent hydrolysis of ester, thioester, amide, peptide and isopeptide bonds formed by the C-terminal Gly of ubiquitin (a 76-residue protein attached to proteins as an intracellular targeting signal).. In terms of biological role, deubiquitinating enzyme that plays a role in behavior, possibly by regulating GABA action. May act by mediating the deubiquitination of GAD1/GAD67. Has almost no deubiquitinating activity by itself and requires the interaction with WDR48 to have a high activity. Not involved in deubiquitination of monoubiquitinated FANCD2. This is Ubiquitin carboxyl-terminal hydrolase 46 from Rattus norvegicus (Rat).